A 325-amino-acid chain; its full sequence is GTP 3',8-cyclase (325 aa).

Residues 10–229 form the Radical SAM core domain; sequence GYGRRINYLR…PSLEKIKSED (220 aa). Arg19 is a GTP binding site. Residues Cys26 and Cys30 each contribute to the [4Fe-4S] cluster site. Tyr32 provides a ligand contact to S-adenosyl-L-methionine. Cys33 is a binding site for [4Fe-4S] cluster. GTP is bound at residue Arg69. S-adenosyl-L-methionine is bound at residue Gly73. Thr100 lines the GTP pocket. Ser124 provides a ligand contact to S-adenosyl-L-methionine. GTP is bound at residue Lys161. Met195 provides a ligand contact to S-adenosyl-L-methionine. Residues Cys257 and Cys260 each contribute to the [4Fe-4S] cluster site. 262–264 is a binding site for GTP; that stretch reads RLR. A [4Fe-4S] cluster-binding site is contributed by Cys274.

Belongs to the radical SAM superfamily. MoaA family. In terms of assembly, monomer and homodimer. The cofactor is [4Fe-4S] cluster.

The catalysed reaction is GTP + AH2 + S-adenosyl-L-methionine = (8S)-3',8-cyclo-7,8-dihydroguanosine 5'-triphosphate + 5'-deoxyadenosine + L-methionine + A + H(+). Its pathway is cofactor biosynthesis; molybdopterin biosynthesis. Functionally, catalyzes the cyclization of GTP to (8S)-3',8-cyclo-7,8-dihydroguanosine 5'-triphosphate. In Peptoclostridium acidaminophilum (Eubacterium acidaminophilum), this protein is GTP 3',8-cyclase.